Consider the following 618-residue polypeptide: UvrABC system protein C (618 aa).

The GIY-YIG domain maps to 20–98; that stretch reads TAPGVYRMYA…IKSLSPRYNV (79 aa). The 36-residue stretch at 207-242 folds into the UVR domain; sequence DQLGEEIMQSMQQASEALEFERAARLRDLLSSLRSM.

This sequence belongs to the UvrC family. In terms of assembly, interacts with UvrB in an incision complex.

It is found in the cytoplasm. The UvrABC repair system catalyzes the recognition and processing of DNA lesions. UvrC both incises the 5' and 3' sides of the lesion. The N-terminal half is responsible for the 3' incision and the C-terminal half is responsible for the 5' incision. This is UvrABC system protein C from Xanthomonas oryzae pv. oryzae (strain MAFF 311018).